A 291-amino-acid polypeptide reads, in one-letter code: Shikimate dehydrogenase (NADP(+)) (291 aa).

Shikimate contacts are provided by residues 26-28 (SLS) and Ser73. Residue Lys77 is the Proton acceptor of the active site. Asn98 and Asp113 together coordinate shikimate. Residues 137 to 141 (GAGGA) and Val238 contribute to the NADP(+) site. Tyr240 contributes to the shikimate binding site. Gly261 contacts NADP(+).

Belongs to the shikimate dehydrogenase family. Homodimer.

The enzyme catalyses shikimate + NADP(+) = 3-dehydroshikimate + NADPH + H(+). It functions in the pathway metabolic intermediate biosynthesis; chorismate biosynthesis; chorismate from D-erythrose 4-phosphate and phosphoenolpyruvate: step 4/7. In terms of biological role, involved in the biosynthesis of the chorismate, which leads to the biosynthesis of aromatic amino acids. Catalyzes the reversible NADPH linked reduction of 3-dehydroshikimate (DHSA) to yield shikimate (SA). This chain is Shikimate dehydrogenase (NADP(+)), found in Listeria monocytogenes serotype 4b (strain F2365).